Consider the following 116-residue polypeptide: Large ribosomal subunit protein uL18 (116 aa).

Belongs to the universal ribosomal protein uL18 family. Part of the 50S ribosomal subunit; part of the 5S rRNA/L5/L18/L25 subcomplex. Contacts the 5S and 23S rRNAs.

In terms of biological role, this is one of the proteins that bind and probably mediate the attachment of the 5S RNA into the large ribosomal subunit, where it forms part of the central protuberance. This chain is Large ribosomal subunit protein uL18, found in Teredinibacter turnerae (strain ATCC 39867 / T7901).